Consider the following 508-residue polypeptide: Photosystem II CP47 reaction center protein (508 aa).

The next 6 helical transmembrane spans lie at 21–36, 101–115, 140–156, 203–218, 237–252, and 457–472; these read AVHI…WAGS, IVFS…IWHW, GIHL…FGAF, IAAG…FHLS, VLSS…AFVV, and SFAL…HGAR.

Belongs to the PsbB/PsbC family. PsbB subfamily. In terms of assembly, PSII is composed of 1 copy each of membrane proteins PsbA, PsbB, PsbC, PsbD, PsbE, PsbF, PsbH, PsbI, PsbJ, PsbK, PsbL, PsbM, PsbT, PsbX, PsbY, PsbZ, Psb30/Ycf12, at least 3 peripheral proteins of the oxygen-evolving complex and a large number of cofactors. It forms dimeric complexes. The cofactor is Binds multiple chlorophylls. PSII binds additional chlorophylls, carotenoids and specific lipids..

It is found in the plastid. The protein localises to the chloroplast thylakoid membrane. In terms of biological role, one of the components of the core complex of photosystem II (PSII). It binds chlorophyll and helps catalyze the primary light-induced photochemical processes of PSII. PSII is a light-driven water:plastoquinone oxidoreductase, using light energy to abstract electrons from H(2)O, generating O(2) and a proton gradient subsequently used for ATP formation. This is Photosystem II CP47 reaction center protein from Ranunculus macranthus (Large buttercup).